A 446-amino-acid polypeptide reads, in one-letter code: Probable cytosolic iron-sulfur protein assembly protein 1 (446 aa).

WD repeat units follow at residues 17-59 (AFKP…AHSN), 63-106 (GHTR…PLEE), 143-182 (GHENEIKSAAFSPSGQYLATCSRDKSIWIWEDVGANEGDD), 192-241 (EHDG…EWAC), 247-291 (GHSS…PEAS), 330-368 (VHTRDIYSASWSKNGRVASTGSDGSILVYEECAPSNPST), and 398-446 (GHGP…SIEL). The span at 106–128 (EGTKKGESTEIDVTRRRNNNDSD) shows a compositional bias: basic and acidic residues. Residues 106–133 (EGTKKGESTEIDVTRRRNNNDSDKDNDD) form a disordered region.

This sequence belongs to the WD repeat CIA1 family.

Its function is as follows. Essential component of the cytosolic iron-sulfur (Fe/S) protein assembly machinery. Required for the maturation of extramitochondrial Fe/S proteins. The polypeptide is Probable cytosolic iron-sulfur protein assembly protein 1 (Pyricularia oryzae (strain 70-15 / ATCC MYA-4617 / FGSC 8958) (Rice blast fungus)).